The chain runs to 480 residues: Glycogen synthase (480 aa).

Residue Lys-15 participates in ADP-alpha-D-glucose binding.

Belongs to the glycosyltransferase 1 family. Bacterial/plant glycogen synthase subfamily.

The enzyme catalyses [(1-&gt;4)-alpha-D-glucosyl](n) + ADP-alpha-D-glucose = [(1-&gt;4)-alpha-D-glucosyl](n+1) + ADP + H(+). It participates in glycan biosynthesis; glycogen biosynthesis. Synthesizes alpha-1,4-glucan chains using ADP-glucose. This Rhizobium rhizogenes (strain K84 / ATCC BAA-868) (Agrobacterium radiobacter) protein is Glycogen synthase.